Here is a 109-residue protein sequence, read N- to C-terminus: Flagellar transcriptional regulator FlhD (109 aa).

Belongs to the FlhD family. As to quaternary structure, homodimer; disulfide-linked. Forms a heterohexamer composed of two FlhC and four FlhD subunits. Each FlhC binds a FlhD dimer, forming a heterotrimer, and a hexamer assembles by dimerization of two heterotrimers.

It localises to the cytoplasm. In terms of biological role, functions in complex with FlhC as a master transcriptional regulator that regulates transcription of several flagellar and non-flagellar operons by binding to their promoter region. Activates expression of class 2 flagellar genes, including fliA, which is a flagellum-specific sigma factor that turns on the class 3 genes. Also regulates genes whose products function in a variety of physiological pathways. In Acidovorax sp. (strain JS42), this protein is Flagellar transcriptional regulator FlhD.